The primary structure comprises 65 residues: Large ribosomal subunit protein uL29 (65 aa).

This sequence belongs to the universal ribosomal protein uL29 family.

The polypeptide is Large ribosomal subunit protein uL29 (Leptothrix cholodnii (strain ATCC 51168 / LMG 8142 / SP-6) (Leptothrix discophora (strain SP-6))).